Reading from the N-terminus, the 311-residue chain is tRNA-cytidine(32) 2-sulfurtransferase (311 aa).

Positions 47–52 (SGGKDS) match the PP-loop motif motif. [4Fe-4S] cluster is bound by residues C122, C125, and C213.

The protein belongs to the TtcA family. As to quaternary structure, homodimer. It depends on Mg(2+) as a cofactor. Requires [4Fe-4S] cluster as cofactor.

The protein localises to the cytoplasm. It catalyses the reaction cytidine(32) in tRNA + S-sulfanyl-L-cysteinyl-[cysteine desulfurase] + AH2 + ATP = 2-thiocytidine(32) in tRNA + L-cysteinyl-[cysteine desulfurase] + A + AMP + diphosphate + H(+). It functions in the pathway tRNA modification. Catalyzes the ATP-dependent 2-thiolation of cytidine in position 32 of tRNA, to form 2-thiocytidine (s(2)C32). The sulfur atoms are provided by the cysteine/cysteine desulfurase (IscS) system. This is tRNA-cytidine(32) 2-sulfurtransferase from Escherichia coli (strain 55989 / EAEC).